The primary structure comprises 210 residues: Cell division protein SepF (210 aa).

The tract at residues 13 to 78 (GFGEPTGYDY…VTSTAMNPPM (66 aa)) is disordered. Over residues 22-31 (YDYDEMEGDD) the composition is skewed to acidic residues. The segment covering 47 to 60 (RSEEPHPRPSEPEM) has biased composition (basic and acidic residues). A compositionally biased stretch (polar residues) spans 64–78 (VNTSAVTSTAMNPPM).

Belongs to the SepF family. In terms of assembly, homodimer. Interacts with FtsZ.

The protein resides in the cytoplasm. Cell division protein that is part of the divisome complex and is recruited early to the Z-ring. Probably stimulates Z-ring formation, perhaps through the cross-linking of FtsZ protofilaments. Its function overlaps with FtsA. In Cyanothece sp. (strain PCC 7425 / ATCC 29141), this protein is Cell division protein SepF.